The sequence spans 33 residues: Protamine-1A (33 aa).

The tract at residues 1–33 (PRRRRSSSRPVRRRRRPRRVSRRRRRRGGRRRR) is disordered.

As to expression, testis.

It is found in the nucleus. The protein resides in the chromosome. Functionally, protamines substitute for histones in the chromatin of sperm during the haploid phase of spermatogenesis. They compact sperm DNA into a highly condensed, stable and inactive complex. This is Protamine-1A from Oncorhynchus mykiss (Rainbow trout).